The chain runs to 271 residues: Formamidopyrimidine-DNA glycosylase (271 aa).

The active-site Schiff-base intermediate with DNA is the proline 2. The active-site Proton donor is the glutamate 3. The active-site Proton donor; for beta-elimination activity is the lysine 57. Residues histidine 90, arginine 109, and lysine 151 each coordinate DNA. The segment at histidine 236–threonine 270 adopts an FPG-type zinc-finger fold. Arginine 260 serves as the catalytic Proton donor; for delta-elimination activity.

Belongs to the FPG family. Monomer. The cofactor is Zn(2+).

The enzyme catalyses Hydrolysis of DNA containing ring-opened 7-methylguanine residues, releasing 2,6-diamino-4-hydroxy-5-(N-methyl)formamidopyrimidine.. It carries out the reaction 2'-deoxyribonucleotide-(2'-deoxyribose 5'-phosphate)-2'-deoxyribonucleotide-DNA = a 3'-end 2'-deoxyribonucleotide-(2,3-dehydro-2,3-deoxyribose 5'-phosphate)-DNA + a 5'-end 5'-phospho-2'-deoxyribonucleoside-DNA + H(+). Functionally, involved in base excision repair of DNA damaged by oxidation or by mutagenic agents. Acts as a DNA glycosylase that recognizes and removes damaged bases. Has a preference for oxidized purines, such as 7,8-dihydro-8-oxoguanine (8-oxoG). Has AP (apurinic/apyrimidinic) lyase activity and introduces nicks in the DNA strand. Cleaves the DNA backbone by beta-delta elimination to generate a single-strand break at the site of the removed base with both 3'- and 5'-phosphates. The sequence is that of Formamidopyrimidine-DNA glycosylase from Shewanella sp. (strain W3-18-1).